Here is a 534-residue protein sequence, read N- to C-terminus: Glucomannan 4-beta-mannosyltransferase 2 (534 aa).

Residues 36 to 56 (VIVPLLQLAVYICLLMSVMLL) traverse the membrane as a helical segment. Aspartate 136 is an active-site residue. Substrate contacts are provided by aspartate 195 and aspartate 197. Aspartate 289 is a catalytic residue. Helical transmembrane passes span 368-388 (IIAHWVTFCFYCVVLPLTILV), 404-426 (IITILNSVGTPRSIHLLFYWILF), 483-503 (LNTLELGFAAFLFVCGCYDFV), and 509-529 (YFIYLFLQTMSFFISGLGWIG).

Belongs to the glycosyltransferase 2 family. Plant cellulose synthase-like A subfamily.

It is found in the golgi apparatus membrane. It catalyses the reaction GDP-mannose + (glucomannan)n = GDP + (glucomannan)n+1.. In terms of biological role, possesses glucomannan synthase and mannan synthase activities in vitro. Mannan synthase consists of a 4-beta-mannosyltransferase activity on mannan using GDP-mannose. The beta-1,4-mannan product is the backbone for galactomannan synthesis by galactomannan galactosyltransferase. Galactomannan is a noncellulosic polysaccharides of plant cell wall. This chain is Glucomannan 4-beta-mannosyltransferase 2, found in Arabidopsis thaliana (Mouse-ear cress).